A 221-amino-acid chain; its full sequence is Ras-related protein Rab-27A (221 aa).

Residue Ser2 is modified to N-acetylserine. Residue Ser2 is modified to Phosphoserine. A GTP-binding site is contributed by 16–24 (GDSGVGKTS). An Effector region motif is present at residues 38–46 (FITTVGIDF). Residues 74 to 78 (DTAGQ), 133 to 136 (NKSD), and 163 to 165 (SAA) each bind GTP. Residues Cys123 and Cys188 are joined by a disulfide bond. Residues Cys219 and Cys221 are each lipidated (S-geranylgeranyl cysteine). At Cys221 the chain carries Cysteine methyl ester.

It belongs to the small GTPase superfamily. Rab family. As to quaternary structure, binds SYTL1, SYTL2, SLAC2B, MYRIP, SYTL3, SYTL4, SYTL5 and MLPH. Interacts with UNC13D. Interacts with RPH3A and RPH3A. Does not interact with the BLOC-3 complex (heterodimer of HPS1 and HPS4). Interacts (GDP-bound form preferentially) with DENND10. Detected in melanocytes. Expressed abundantly in the stomach and is predominantly localized at the apical region of gastric-surface mucus cells. Also expressed in the thymus and lung.

The protein resides in the membrane. Its subcellular location is the melanosome. It localises to the late endosome. It is found in the lysosome. The catalysed reaction is GTP + H2O = GDP + phosphate + H(+). With respect to regulation, regulated by guanine nucleotide exchange factors (GEFs) which promote the exchange of bound GDP for free GTP, GTPase activating proteins (GAPs) which increase the GTP hydrolysis activity, and GDP dissociation inhibitors which inhibit the dissociation of the nucleotide from the GTPase. Activated by GEFs such as DENND10. In terms of biological role, small GTPase which cycles between active GTP-bound and inactive GDP-bound states. In its active state, binds to a variety of effector proteins to regulate homeostasis of late endocytic pathway, including endosomal positioning, maturation and secretion. Plays a role in cytotoxic granule exocytosis in lymphocytes. Required for both granule maturation and granule docking and priming at the immunologic synapse. The sequence is that of Ras-related protein Rab-27A (Rab27a) from Mus musculus (Mouse).